Here is a 254-residue protein sequence, read N- to C-terminus: AA9 family lytic polysaccharide monooxygenase A (254 aa).

Residues 1–19 (MKYSILGLTALSFVASAAA) form the signal peptide. A Cu(2+)-binding site is contributed by histidine 20. At histidine 20 the chain carries Methylhistidine. Valine 28 is a binding site for (1,4-beta-D-glucosyl)n. N-linked (GlcNAc...) asparagine glycosylation occurs at asparagine 52. Residues cysteine 60 and cysteine 186 are joined by a disulfide bond. Residues valine 66, valine 67, aspartate 77, and asparagine 86 each contribute to the (1,4-beta-D-glucosyl)n site. Histidine 97 is a Cu(2+) binding site. Residue asparagine 129 is glycosylated (N-linked (GlcNAc...) asparagine). Residues valine 148 and arginine 159 each coordinate (1,4-beta-D-glucosyl)n. O2 contacts are provided by histidine 166 and glutamine 181. A Cu(2+)-binding site is contributed by tyrosine 183.

The protein belongs to the polysaccharide monooxygenase AA9 family. Cu(2+) serves as cofactor. In terms of processing, the catalytically essential N-terminal histidine His-20 is post-translationally modified by methylation to prevent protonation of the histidine side chain, and protect the critical active site of the enzyme from oxidative damage.

It is found in the secreted. The catalysed reaction is [(1-&gt;4)-beta-D-glucosyl]n+m + reduced acceptor + O2 = 4-dehydro-beta-D-glucosyl-[(1-&gt;4)-beta-D-glucosyl]n-1 + [(1-&gt;4)-beta-D-glucosyl]m + acceptor + H2O.. The polyphenol cinnamtannin B1 contained in methanolic extract of Cinnamomum cassia (cinnamon) acts as an inhibitor of catalytic activity. Its function is as follows. Lytic polysaccharide monooxygenase (LPMO) that depolymerizes crystalline and amorphous polysaccharides via the oxidation of scissile alpha- or beta-(1-4)-glycosidic bonds, yielding C1 or C4 oxidation product. Catalysis by LPMOs requires the reduction of the active-site copper from Cu(II) to Cu(I) by a reducing agent and H(2)O(2) or O(2) as a cosubstrate. Is able to cleave phosphoric acid swollen cellulose (PASC) in the presence of a reducing agent, yielding a range of cellooligosaccharides dominated by cellobiose and cellotriose. Activity is less sensitive to the reducing agent potential when cleaving xylan, suggesting that distinct catalytic mechanisms exist for xylan and glucan cleavage. This is AA9 family lytic polysaccharide monooxygenase A from Panus similis (Lentinoid fungus).